Here is a 393-residue protein sequence, read N- to C-terminus: Phosphoglycerate kinase (393 aa).

Residues 22–24, Arg37, 60–63, Arg119, and Arg152 each bind substrate; these read DFN and HLGR. Residues Lys202, Gly293, Glu324, and 350-353 contribute to the ATP site; that span reads GGDS.

Belongs to the phosphoglycerate kinase family. Monomer.

It localises to the cytoplasm. It carries out the reaction (2R)-3-phosphoglycerate + ATP = (2R)-3-phospho-glyceroyl phosphate + ADP. Its pathway is carbohydrate degradation; glycolysis; pyruvate from D-glyceraldehyde 3-phosphate: step 2/5. This is Phosphoglycerate kinase from Borreliella afzelii (strain PKo) (Borrelia afzelii).